The sequence spans 258 residues: 6-carboxyhexanoate--CoA ligase (258 aa).

Belongs to the BioW family. In terms of assembly, homodimer. The cofactor is Mg(2+).

It catalyses the reaction heptanedioate + ATP + CoA = 6-carboxyhexanoyl-CoA + AMP + diphosphate. It functions in the pathway metabolic intermediate metabolism; pimeloyl-CoA biosynthesis; pimeloyl-CoA from pimelate: step 1/1. In terms of biological role, catalyzes the transformation of pimelate into pimeloyl-CoA with concomitant hydrolysis of ATP to AMP. In Bacillus atrophaeus (strain 1942), this protein is 6-carboxyhexanoate--CoA ligase.